The sequence spans 288 residues: Transformer-2 protein homolog beta (288 aa).

Disordered stretches follow at residues 1-114 (MSDS…RANP) and 196-225 (TKRP…YDRG). Ser-2 is modified (N-acetylserine). Phosphoserine is present on residues Ser-2, Ser-4, and Ser-14. Low complexity predominate over residues 17–28 (ASRSGSAHGSGK). The residue at position 29 (Ser-29) is a Phosphoserine. A Phosphothreonine modification is found at Thr-33. The segment covering 59–109 (RSRRSSRRHYTRSRSRSRSHRRSRSRSYSRDYRRRHSHSHSPMSTRRRHVG) has biased composition (basic residues). Residues Ser-83, Ser-85, Ser-87, Ser-95, Ser-97, and Ser-99 each carry the phosphoserine modification. The residue at position 103 (Thr-103) is a Phosphothreonine. The region spanning 118–196 (CCLGVFGLSL…RRIRVDFSIT (79 aa)) is the RRM domain. The segment at 193 to 230 (FSITKRPHTPTPGIYMGRPTYGSSRRRDYYDRGYDRGY) is linker. A Glycyl lysine isopeptide (Lys-Gly) (interchain with G-Cter in SUMO2) cross-link involves residue Lys-197. Residues Thr-201 and Thr-203 each carry the phosphothreonine modification. A phosphoserine mark is found at Ser-215 and Ser-237. Arg-241 is subject to Asymmetric dimethylarginine; alternate. Arg-241 is subject to Dimethylated arginine; alternate. Arg-241 is modified (omega-N-methylarginine; alternate). The interval 242-288 (GGGGGGGGWRAAQDRDQIYRRRSPSPYYSRGGYRSRSRSRSYSPRRY) is disordered. Residues 274–288 (YRSRSRSRSYSPRRY) are compositionally biased toward basic residues.

This sequence belongs to the splicing factor SR family. Found in a pre-mRNA exonic splicing enhancer (ESE) complex with TRA2B/SFRS10, SNRNP70, SNRPA1 and SRRM1. Binds to A3 enhancer proteins SFRS4, SFRS5, SFRS6 and SFRS9. Interacts with CPSF6, RBMY1A1, RBMX, RNPS1 and phosphorylated SFRS13A. Interacts with SAFB/SAFB1. Interacts with ILDR1 (via C-terminus) and ILDR2. In terms of processing, phosphorylated in the RS domains.

The protein resides in the nucleus. Sequence-specific RNA-binding protein which participates in the control of pre-mRNA splicing. Can either activate or suppress exon inclusion. Acts additively with RBMX to promote exon 7 inclusion of the survival motor neuron SMN2. Activates the splicing of MAPT/Tau exon 10. Alters pre-mRNA splicing patterns by antagonizing the effects of splicing regulators, like RBMX. Binds to the AG-rich SE2 domain in the SMN exon 7 RNA. Binds to pre-mRNA. This Bos taurus (Bovine) protein is Transformer-2 protein homolog beta (TRA2B).